Reading from the N-terminus, the 312-residue chain is Pyridoxal kinase (312 aa).

Met-1 carries the post-translational modification N-acetylmethionine. The pyridoxal site is built by Ser-12 and Thr-47. Thr-47 is a pyridoxal 5'-phosphate binding site. Phosphoserine is present on Ser-59. Asp-113 contributes to the ATP binding site. Asp-113 is a Na(+) binding site. Mg(2+) is bound at residue Asp-118. Na(+) is bound at residue Thr-148. 150 to 153 (NQFE) contacts ATP. Ser-164 bears the Phosphoserine mark. Position 186 (Thr-186) interacts with Na(+). Residue 186 to 187 (TS) participates in ATP binding. Phosphoserine is present on Ser-213. Residues 226 to 228 (VDP) and Thr-233 contribute to the ATP site. 234–235 (GD) is a binding site for pyridoxal 5'-phosphate. Asp-235 (proton acceptor) is an active-site residue. Ser-285 carries the post-translational modification Phosphoserine.

The protein belongs to the pyridoxine kinase family. Homodimer. Zn(2+) is required as a cofactor. It depends on Mg(2+) as a cofactor.

It localises to the cytoplasm. It is found in the cytosol. The enzyme catalyses pyridoxal + ATP = pyridoxal 5'-phosphate + ADP + H(+). The catalysed reaction is pyridoxamine + ATP = pyridoxamine 5'-phosphate + ADP + H(+). It carries out the reaction pyridoxine + ATP = pyridoxine 5'-phosphate + ADP + H(+). The protein operates within cofactor metabolism; pyridoxal 5'-phosphate salvage; pyridoxal 5'-phosphate from pyridoxal: step 1/1. It participates in cofactor metabolism; pyridoxal 5'-phosphate salvage; pyridoxine 5'-phosphate from pyridoxine: step 1/1. It functions in the pathway cofactor metabolism; pyridoxal 5'-phosphate salvage; pyridoxamine 5'-phosphate from pyridoxamine: step 1/1. Its activity is regulated as follows. Activity is increased in the presence of K(+)or Na(+). Its function is as follows. Catalyzes the phosphorylation of the dietary vitamin B6 vitamers pyridoxal (PL), pyridoxine (PN) and pyridoxamine (PM) to form pyridoxal 5'-phosphate (PLP), pyridoxine 5'-phosphate (PNP) and pyridoxamine 5'-phosphate (PMP), respectively. PLP is the active form of vitamin B6, and acts as a cofactor for over 140 different enzymatic reactions. In Rattus norvegicus (Rat), this protein is Pyridoxal kinase (Pdxk).